The following is a 227-amino-acid chain: Cytochrome c oxidase subunit 2 (227 aa).

Residues 1–14 (MPYPMQLGFQDATS) lie on the Mitochondrial intermembrane side of the membrane. Residues 15-45 (PIMEELTYFHDHTLMIVFLISSLVLYIIILM) form a helical membrane-spanning segment. Residues 46–59 (LTTKLTHTSTMDAQ) are Mitochondrial matrix-facing. Residues 60–87 (EVETIWTILPAVILVLIALPSLRILYMM) traverse the membrane as a helical segment. At 88 to 227 (DEIYNPYLTI…YFEKWSSMMQ (140 aa)) the chain is on the mitochondrial intermembrane side. Residues His161, Cys196, Glu198, Cys200, His204, and Met207 each coordinate Cu cation. Glu198 contacts Mg(2+). The residue at position 218 (Tyr218) is a Phosphotyrosine.

It belongs to the cytochrome c oxidase subunit 2 family. In terms of assembly, component of the cytochrome c oxidase (complex IV, CIV), a multisubunit enzyme composed of 14 subunits. The complex is composed of a catalytic core of 3 subunits MT-CO1, MT-CO2 and MT-CO3, encoded in the mitochondrial DNA, and 11 supernumerary subunits COX4I, COX5A, COX5B, COX6A, COX6B, COX6C, COX7A, COX7B, COX7C, COX8 and NDUFA4, which are encoded in the nuclear genome. The complex exists as a monomer or a dimer and forms supercomplexes (SCs) in the inner mitochondrial membrane with NADH-ubiquinone oxidoreductase (complex I, CI) and ubiquinol-cytochrome c oxidoreductase (cytochrome b-c1 complex, complex III, CIII), resulting in different assemblies (supercomplex SCI(1)III(2)IV(1) and megacomplex MCI(2)III(2)IV(2)). Found in a complex with TMEM177, COA6, COX18, COX20, SCO1 and SCO2. Interacts with TMEM177 in a COX20-dependent manner. Interacts with COX20. Interacts with COX16. Cu cation serves as cofactor.

It is found in the mitochondrion inner membrane. It carries out the reaction 4 Fe(II)-[cytochrome c] + O2 + 8 H(+)(in) = 4 Fe(III)-[cytochrome c] + 2 H2O + 4 H(+)(out). Component of the cytochrome c oxidase, the last enzyme in the mitochondrial electron transport chain which drives oxidative phosphorylation. The respiratory chain contains 3 multisubunit complexes succinate dehydrogenase (complex II, CII), ubiquinol-cytochrome c oxidoreductase (cytochrome b-c1 complex, complex III, CIII) and cytochrome c oxidase (complex IV, CIV), that cooperate to transfer electrons derived from NADH and succinate to molecular oxygen, creating an electrochemical gradient over the inner membrane that drives transmembrane transport and the ATP synthase. Cytochrome c oxidase is the component of the respiratory chain that catalyzes the reduction of oxygen to water. Electrons originating from reduced cytochrome c in the intermembrane space (IMS) are transferred via the dinuclear copper A center (CU(A)) of subunit 2 and heme A of subunit 1 to the active site in subunit 1, a binuclear center (BNC) formed by heme A3 and copper B (CU(B)). The BNC reduces molecular oxygen to 2 water molecules using 4 electrons from cytochrome c in the IMS and 4 protons from the mitochondrial matrix. The protein is Cytochrome c oxidase subunit 2 (MT-CO2) of Osphranter robustus (Wallaroo).